We begin with the raw amino-acid sequence, 1012 residues long: Retinoblastoma-related protein (1012 aa).

Residues 403–604 (TPVSTAMTTA…EKGSSMDNSL (202 aa)) are domain A. Residues 403–863 (TPVSTAMTTA…NEVFIPSVKP (461 aa)) form a pocket region. Residues 605 to 723 (IIARPALSAG…PGGGGETCAE (119 aa)) are spacer. The interval 724–863 (TGINIFFSKI…NEVFIPSVKP (140 aa)) is domain B. Residues 884 to 905 (NNDKDGQCPGSPKLSTFPSLPD) form a disordered region.

Belongs to the retinoblastoma protein (RB) family.

The protein localises to the nucleus. Functionally, regulator of biological processes that recruits a histone deacetylase to control gene transcription. May play a role in the entry into mitosis, negatively regulating the cell proliferation. Formation of stable complexes with geminiviridae replication-associated proteins may create a cellular environment which favors viral DNA replication. This Oxybasis rubra (Red goosefoot) protein is Retinoblastoma-related protein (RB).